The sequence spans 118 residues: Mitochondrial protein YPR099C (118 aa).

Its subcellular location is the mitochondrion. Its function is as follows. Essential for the functional mitochondria and respiratory growth. The polypeptide is Mitochondrial protein YPR099C (Saccharomyces cerevisiae (strain ATCC 204508 / S288c) (Baker's yeast)).